The primary structure comprises 209 residues: PRA1 family protein A1 (209 aa).

4 helical membrane-spanning segments follow: residues 51-73, 77-99, 144-164, and 166-186; these read LYYYRTNYFIMIVVILGLGVLTR, IFAALLTALSLAFLNDSFAGSFS, VFVLTCSLVSFALWYISSGLL, and VSVALLIAHLATILHASLRTP.

This sequence belongs to the PRA1 family.

It localises to the endoplasmic reticulum membrane. In terms of biological role, may be involved in both secretory and endocytic intracellular trafficking in the endosomal/prevacuolar compartments. This is PRA1 family protein A1 (PRA1A1) from Arabidopsis thaliana (Mouse-ear cress).